A 233-amino-acid chain; its full sequence is Small ribosomal subunit protein uS2 (233 aa).

It belongs to the universal ribosomal protein uS2 family.

This chain is Small ribosomal subunit protein uS2, found in Clostridium novyi (strain NT).